We begin with the raw amino-acid sequence, 237 residues long: 2-C-methyl-D-erythritol 4-phosphate cytidylyltransferase (237 aa).

It belongs to the IspD/TarI cytidylyltransferase family. IspD subfamily.

It carries out the reaction 2-C-methyl-D-erythritol 4-phosphate + CTP + H(+) = 4-CDP-2-C-methyl-D-erythritol + diphosphate. It participates in isoprenoid biosynthesis; isopentenyl diphosphate biosynthesis via DXP pathway; isopentenyl diphosphate from 1-deoxy-D-xylulose 5-phosphate: step 2/6. Catalyzes the formation of 4-diphosphocytidyl-2-C-methyl-D-erythritol from CTP and 2-C-methyl-D-erythritol 4-phosphate (MEP). This Paraburkholderia xenovorans (strain LB400) protein is 2-C-methyl-D-erythritol 4-phosphate cytidylyltransferase.